The chain runs to 361 residues: Tetrathionate reductase subunit C (361 aa).

Transmembrane regions (helical) follow at residues 26–46 (FSYA…LALL), 53–73 (AIPM…LGPL), 104–124 (ALYG…FALL), 160–180 (LAAI…MLFF), 193–213 (LMLP…ALIL), 233–253 (GAAA…WGMW), 258–278 (FAAV…TFIL), 288–308 (ITPI…WNLI), and 334–354 (AVSP…IFPM).

It belongs to the NrfD family. As to quaternary structure, probably composed of three subunits: TtrA, TtrB and TtrC.

The protein localises to the cell membrane. In terms of biological role, part of a membrane-bound tetrathionate reductase that catalyzes the reduction of tetrathionate to thiosulfate. TtrC probably anchors TtrA and TtrB to the external face of the cytoplasmic membrane. May transfer electrons from membrane quinol to TtrB. The polypeptide is Tetrathionate reductase subunit C (ttrC) (Archaeoglobus fulgidus (strain ATCC 49558 / DSM 4304 / JCM 9628 / NBRC 100126 / VC-16)).